The following is a 456-amino-acid chain: Trigger factor (456 aa).

One can recognise a PPIase FKBP-type domain in the interval 166–245; it reads GDYANIDLNA…VNSVKAEELP (80 aa).

Belongs to the FKBP-type PPIase family. Tig subfamily.

The protein resides in the cytoplasm. The enzyme catalyses [protein]-peptidylproline (omega=180) = [protein]-peptidylproline (omega=0). Its function is as follows. Involved in protein export. Acts as a chaperone by maintaining the newly synthesized protein in an open conformation. Functions as a peptidyl-prolyl cis-trans isomerase. The chain is Trigger factor from Bifidobacterium adolescentis (strain ATCC 15703 / DSM 20083 / NCTC 11814 / E194a).